The primary structure comprises 179 residues: Large ribosomal subunit protein uL5 (179 aa).

It belongs to the universal ribosomal protein uL5 family. In terms of assembly, part of the 50S ribosomal subunit; part of the 5S rRNA/L5/L18/L25 subcomplex. Contacts the 5S rRNA and the P site tRNA. Forms a bridge to the 30S subunit in the 70S ribosome.

Its function is as follows. This is one of the proteins that bind and probably mediate the attachment of the 5S RNA into the large ribosomal subunit, where it forms part of the central protuberance. In the 70S ribosome it contacts protein S13 of the 30S subunit (bridge B1b), connecting the 2 subunits; this bridge is implicated in subunit movement. Contacts the P site tRNA; the 5S rRNA and some of its associated proteins might help stabilize positioning of ribosome-bound tRNAs. The polypeptide is Large ribosomal subunit protein uL5 (Pasteurella multocida (strain Pm70)).